The following is a 209-amino-acid chain: Virulence factors putative positive transcription regulator BvgA (209 aa).

The Response regulatory domain occupies 4 to 119 (KVLIIDDHPV…EVINAAKAVM (116 aa)). At Asp-54 the chain carries 4-aspartylphosphate. Residues 142–207 (DSTLISVLSN…ELIDLAKRNN (66 aa)) form the HTH luxR-type domain. Residues 166–185 (NKDIADSMFLSNKTVSTYKT) constitute a DNA-binding region (H-T-H motif).

Homodimer. Post-translationally, phosphorylated by BvgS.

Functionally, member of the two-component regulatory system BvgS/BvgA. Activates the transcription of virulence genes. In Bordetella bronchiseptica (strain ATCC BAA-588 / NCTC 13252 / RB50) (Alcaligenes bronchisepticus), this protein is Virulence factors putative positive transcription regulator BvgA (bvgA).